Reading from the N-terminus, the 499-residue chain is BTB/POZ domain-containing protein 16 (499 aa).

In terms of domain architecture, BTB spans 143–199; it reads INDPLVTREAFATALKNLYMQEVKICLDDVLGVLAAAHILQFGSLFQRCVTVMMSGL.

In Bos taurus (Bovine), this protein is BTB/POZ domain-containing protein 16 (BTBD16).